Reading from the N-terminus, the 315-residue chain is Homoserine kinase (315 aa).

97-107 is an ATP binding site; that stretch reads PPARGLGSSAT.

Belongs to the GHMP kinase family. Homoserine kinase subfamily.

Its subcellular location is the cytoplasm. The enzyme catalyses L-homoserine + ATP = O-phospho-L-homoserine + ADP + H(+). The protein operates within amino-acid biosynthesis; L-threonine biosynthesis; L-threonine from L-aspartate: step 4/5. In terms of biological role, catalyzes the ATP-dependent phosphorylation of L-homoserine to L-homoserine phosphate. The protein is Homoserine kinase of Prochlorococcus marinus (strain MIT 9301).